The primary structure comprises 136 residues: uncharacterized protein (136 aa).

Disordered regions lie at residues 58–82 and 112–136; these read TSDD…TTQT and NNPK…VVTQ.

This is an uncharacterized protein from Dictyostelium discoideum (Social amoeba).